The primary structure comprises 122 residues: Protein GL2-INTERACTING REPRESSOR 1 (122 aa).

Residues 1-10 (MSRRSPKLEL) show a composition bias toward basic and acidic residues. A disordered region spans residues 1 to 62 (MSRRSPKLEL…PSVRYSTSPE (62 aa)). The EAR signature appears at 7–12 (KLELKL). Residues 27-46 (SPSRSATTSPTSPPSSCVSS) are compositionally biased toward low complexity. Over residues 47–62 (EMNQDEPSVRYSTSPE) the composition is skewed to polar residues.

As to quaternary structure, interacts with GL2. Interacts with TPL. Expressed in root and shoot meristems.

The protein resides in the nucleus. Its function is as follows. Acts as a negative regulator of root hair development redundantly with GIR2. GIR1 and GIR2 may function as adapter proteins that associate with GL2 and participate in the control of root hair formation. GIR1 and GIR2 may function as adapter proteins that associate with TPL and participate in the repression of root gene expression. This Arabidopsis thaliana (Mouse-ear cress) protein is Protein GL2-INTERACTING REPRESSOR 1.